A 310-amino-acid chain; its full sequence is Ribose-phosphate pyrophosphokinase (310 aa).

ATP-binding positions include 34–36 (DQE) and 93–94 (RQ). Mg(2+) is bound by residues histidine 127 and aspartate 167. Lysine 190 is a catalytic residue. Residues arginine 192, aspartate 216, and 220 to 224 (DSGGT) each bind D-ribose 5-phosphate.

Belongs to the ribose-phosphate pyrophosphokinase family. Class I subfamily. As to quaternary structure, homohexamer. Mg(2+) is required as a cofactor.

It is found in the cytoplasm. It carries out the reaction D-ribose 5-phosphate + ATP = 5-phospho-alpha-D-ribose 1-diphosphate + AMP + H(+). The protein operates within metabolic intermediate biosynthesis; 5-phospho-alpha-D-ribose 1-diphosphate biosynthesis; 5-phospho-alpha-D-ribose 1-diphosphate from D-ribose 5-phosphate (route I): step 1/1. Involved in the biosynthesis of the central metabolite phospho-alpha-D-ribosyl-1-pyrophosphate (PRPP) via the transfer of pyrophosphoryl group from ATP to 1-hydroxyl of ribose-5-phosphate (Rib-5-P). The chain is Ribose-phosphate pyrophosphokinase from Rhizobium meliloti (strain 1021) (Ensifer meliloti).